The primary structure comprises 77 residues: Acyl carrier protein (77 aa).

Positions 2-77 (SNIEERVKKI…AAIDYVTANQ (76 aa)) constitute a Carrier domain. At serine 37 the chain carries O-(pantetheine 4'-phosphoryl)serine.

It belongs to the acyl carrier protein (ACP) family. In terms of processing, 4'-phosphopantetheine is transferred from CoA to a specific serine of apo-ACP by AcpS. This modification is essential for activity because fatty acids are bound in thioester linkage to the sulfhydryl of the prosthetic group.

The protein localises to the cytoplasm. The protein operates within lipid metabolism; fatty acid biosynthesis. Carrier of the growing fatty acid chain in fatty acid biosynthesis. This chain is Acyl carrier protein, found in Colwellia psychrerythraea (strain 34H / ATCC BAA-681) (Vibrio psychroerythus).